The following is a 474-amino-acid chain: Membrane-bound acylglycerophosphatidylinositol O-acyltransferase mboat7 (474 aa).

Topologically, residues Met1–Glu5 are cytoplasmic. Residues Leu6–Phe22 form a helical membrane-spanning segment. At Lys23–Gly33 the chain is on the lumenal side. A helical membrane pass occupies residues Ser34–Ile57. The Cytoplasmic segment spans residues Leu58–Phe73. A helical transmembrane segment spans residues Pro74 to Asp93. The Lumenal portion of the chain corresponds to Ile94–Arg193. A helical membrane pass occupies residues Leu194–Phe211. Over Pro212 to Leu230 the chain is Cytoplasmic. The helical transmembrane segment at Phe231–Phe260 threads the bilayer. The Lumenal portion of the chain corresponds to Gly261–Trp427. An N-linked (GlcNAc...) asparagine glycan is attached at Asn322. Residues Gln428–Leu448 form a helical membrane-spanning segment. Residues Ala449–Gln473 are Cytoplasmic-facing.

This sequence belongs to the membrane-bound acyltransferase family.

The protein localises to the endoplasmic reticulum membrane. It carries out the reaction a 1-acyl-sn-glycero-3-phospho-(1D-myo-inositol) + (5Z,8Z,11Z,14Z)-eicosatetraenoyl-CoA = a 1-acyl-2-(5Z,8Z,11Z,14Z-eicosatetraenoyl)-sn-glycero-3-phospho-(1D-myo-inositol) + CoA. The catalysed reaction is (5Z,8Z,11Z,14Z)-eicosatetraenoyl-CoA + 1-hexadecanoyl-sn-glycero-3-phosphocholine = 1-hexadecanoyl-2-(5Z,8Z,11Z,14Z-eicosatetraenoyl)-sn-glycero-3-phosphocholine + CoA. The enzyme catalyses a 1-acyl-sn-glycero-3-phospho-(1D-myo-inositol) + an acyl-CoA = a 1,2-diacyl-sn-glycero-3-phospho-(1D-myo-inositol) + CoA. It catalyses the reaction 1-octadecanoyl-sn-glycero-3-phospho-(1D-myo-inositol) + (5Z,8Z,11Z,14Z)-eicosatetraenoyl-CoA = 1-octadecanoyl-2-(5Z,8Z,11Z,14Z-eicosatetraenoyl)-sn-glycero-3-phospho-(1D-myo-inositol) + CoA. The protein operates within lipid metabolism; phospholipid metabolism. In terms of biological role, acyltransferase which catalyzes the transfer of an acyl group from an acyl-CoA to a lysophosphatidylinositol (1-acylglycerophosphatidylinositol or LPI) leading to the production of a phosphatidylinositol (1,2-diacyl-sn-glycero-3-phosphoinositol or PI) and participates in the reacylation step of the phospholipid remodeling pathway also known as the Lands cycle. Prefers arachidonoyl-CoA as the acyl donor, thus contributing to the regulation of free levels arachidonic acid in cell. The sequence is that of Membrane-bound acylglycerophosphatidylinositol O-acyltransferase mboat7 (mboat7) from Xenopus laevis (African clawed frog).